The primary structure comprises 208 residues: Large ribosomal subunit protein uL4 (208 aa).

The interval 45 to 96 (RQGTHKSKTRAEVRGGGRKPYRQKGTGNARQGSTRSPLMVGGGTIFGPTPHG) is disordered. The segment covering 69 to 80 (GTGNARQGSTRS) has biased composition (polar residues).

This sequence belongs to the universal ribosomal protein uL4 family. Part of the 50S ribosomal subunit.

One of the primary rRNA binding proteins, this protein initially binds near the 5'-end of the 23S rRNA. It is important during the early stages of 50S assembly. It makes multiple contacts with different domains of the 23S rRNA in the assembled 50S subunit and ribosome. Its function is as follows. Forms part of the polypeptide exit tunnel. This Chlorobium phaeovibrioides (strain DSM 265 / 1930) (Prosthecochloris vibrioformis (strain DSM 265)) protein is Large ribosomal subunit protein uL4.